Consider the following 538-residue polypeptide: Pentatricopeptide repeat-containing protein At1g33350 (538 aa).

PPR repeat units follow at residues 87 to 123 (NTHLYAAVLTAYSSSLPLHASSAFSFFRLMVNRSVPR), 125 to 159 (NHFIYPLVLKSTPYLSSAFSTPLVHTHLFKSGFHL), 160 to 191 (YVVVQTALLHSYASSVSHITLARQLFDEMSER), 192 to 226 (NVVSWTAMLSGYARSGDISNAVALFEDMPERDVPS), 227 to 253 (WNAILAACTQNGLFLEAVSLFRRMINE), 259 to 293 (NEVTVVCVLSACAQTGTLQLAKGIHAFAYRRDLSS), 294 to 324 (DVFVSNSLVDLYGKCGNLEEASSVFKMASKK), 325 to 359 (SLTAWNSMINCFALHGRSEEAIAVFEEMMKLNIND), 363 to 398 (DHITFIGLLNACTHGGLVSKGRGYFDLMTNRFGIEP), and 399 to 433 (RIEHYGCLIDLLGRAGRFDEALEVMSTMKMKADEA). The tract at residues 434–509 (IWGSLLNACK…PPGWSRIEID (76 aa)) is type E motif.

This sequence belongs to the PPR family. PCMP-E subfamily.

The sequence is that of Pentatricopeptide repeat-containing protein At1g33350 (PCMP-E57) from Arabidopsis thaliana (Mouse-ear cress).